The primary structure comprises 201 residues: Adenylyl-sulfate kinase (201 aa).

Residues 1–23 (MALHDENVVWHSHPVTPQQREQH) are disordered. 35–42 (GLSGSGKS) is a binding site for ATP. Ser109 functions as the Phosphoserine intermediate in the catalytic mechanism.

The protein belongs to the APS kinase family.

The enzyme catalyses adenosine 5'-phosphosulfate + ATP = 3'-phosphoadenylyl sulfate + ADP + H(+). The protein operates within sulfur metabolism; hydrogen sulfide biosynthesis; sulfite from sulfate: step 2/3. In terms of biological role, catalyzes the synthesis of activated sulfate. The protein is Adenylyl-sulfate kinase of Escherichia coli O6:K15:H31 (strain 536 / UPEC).